The primary structure comprises 138 residues: Large ribosomal subunit protein bL19 (138 aa).

Belongs to the bacterial ribosomal protein bL19 family.

Its function is as follows. This protein is located at the 30S-50S ribosomal subunit interface and may play a role in the structure and function of the aminoacyl-tRNA binding site. This is Large ribosomal subunit protein bL19 from Rickettsia akari (strain Hartford).